We begin with the raw amino-acid sequence, 77 residues long: Putative defensin-like protein 120 (77 aa).

An N-terminal signal peptide occupies residues 1–26; sequence MTQKATILAIFMVVLVLGLETKETQG. Disulfide bonds link Cys-30–Cys-75, Cys-39–Cys-60, Cys-44–Cys-69, and Cys-48–Cys-71.

The protein belongs to the DEFL family.

Its subcellular location is the secreted. This is Putative defensin-like protein 120 (LCR56) from Arabidopsis thaliana (Mouse-ear cress).